The primary structure comprises 172 residues: Large ribosomal subunit protein uL10 (172 aa).

Belongs to the universal ribosomal protein uL10 family. Part of the ribosomal stalk of the 50S ribosomal subunit. The N-terminus interacts with L11 and the large rRNA to form the base of the stalk. The C-terminus forms an elongated spine to which L12 dimers bind in a sequential fashion forming a multimeric L10(L12)X complex.

Functionally, forms part of the ribosomal stalk, playing a central role in the interaction of the ribosome with GTP-bound translation factors. The sequence is that of Large ribosomal subunit protein uL10 from Brucella abortus (strain S19).